Here is a 279-residue protein sequence, read N- to C-terminus: Probable endonuclease 4 (279 aa).

Positions 69, 109, 145, 179, 182, 216, 229, 231, and 261 each coordinate Zn(2+).

It belongs to the AP endonuclease 2 family. Zn(2+) serves as cofactor.

It catalyses the reaction Endonucleolytic cleavage to 5'-phosphooligonucleotide end-products.. In terms of biological role, endonuclease IV plays a role in DNA repair. It cleaves phosphodiester bonds at apurinic or apyrimidinic (AP) sites, generating a 3'-hydroxyl group and a 5'-terminal sugar phosphate. The sequence is that of Probable endonuclease 4 from Tolumonas auensis (strain DSM 9187 / NBRC 110442 / TA 4).